The chain runs to 42 residues: Potassium channel toxin gamma-KTx 1.10 (42 aa).

Cystine bridges form between Cys5/Cys23, Cys11/Cys34, Cys20/Cys39, and Cys24/Cys41.

As to expression, expressed by the venom gland.

It localises to the secreted. Blocks human Kv11.1/KCNH2/ERG1 potassium channels (reversible, IC(50)=3.4 nM). At high toxin concentrations, block of Kv11.1/KCNH2/ERG1 macroscopic current is almost complete. Does not accelerate the kinetics of the closing process and has no effect on the activation and inactivation kinetics of the Kv11.1/KCNH2/ERG1 channels. The polypeptide is Potassium channel toxin gamma-KTx 1.10 (Centruroides margaritatus (Central American bark Scorpion)).